Reading from the N-terminus, the 194-residue chain is Calcium-binding protein J (194 aa).

EF-hand domains follow at residues 62-97 (WDKD…MTKA) and 98-133 (PVVE…AVAC). Ca(2+) is bound by residues Asp-75, Asp-77, Asn-79, Glu-86, Asp-111, Asp-113, Ser-115, His-117, and Glu-122.

Belongs to the recoverin family.

The protein is Calcium-binding protein J (cbpJ) of Dictyostelium discoideum (Social amoeba).